Here is a 407-residue protein sequence, read N- to C-terminus: uncharacterized protein (407 aa).

This is an uncharacterized protein from Mycobacterium tuberculosis (strain CDC 1551 / Oshkosh).